Consider the following 664-residue polypeptide: Prelamin-A/C (664 aa).

Position 1 is an N-acetylmethionine (Met-1). Positions 1–24 (METPSQRRATRSGAQASSTPLSPT) are disordered. Residues 1–33 (METPSQRRATRSGAQASSTPLSPTRITRLQEKE) form a head region. The tract at residues 1-130 (METPSQRRAT…TKKEGDLMAA (130 aa)) is interaction with MLIP. Residue Thr-3 is modified to Phosphothreonine. Position 5 is a phosphoserine (Ser-5). Thr-10 is modified (phosphothreonine). A phosphoserine mark is found at Ser-12 and Ser-18. At Thr-19 the chain carries Phosphothreonine. Position 22 is a phosphoserine (Ser-22). The 357-residue stretch at 31-387 (EKEDLQELND…KLLEGEEERL (357 aa)) folds into the IF rod domain. N6-acetyllysine; alternate is present on Lys-32. Lys-32 is subject to N6-succinyllysine; alternate. Residue Lys-32 forms a Glycyl lysine isopeptide (Lys-Gly) (interchain with G-Cter in SUMO2); alternate linkage. A coil 1A region spans residues 34–70 (DLQELNDRLAVYIDRVRSLETENAGLRLRITESEEVV). A phosphoserine mark is found at Ser-51, Ser-66, and Ser-71. The interval 71–80 (SREVSGIKSA) is linker 1. Residues Lys-78 and Lys-97 each carry the N6-acetyllysine modification. Residues 81-218 (YEAELGDARK…NIYSEELRET (138 aa)) are coil 1B. Residue Lys-97 forms a Glycyl lysine isopeptide (Lys-Gly) (interchain with G-Cter in SUMO2) linkage. Ser-107 carries the phosphoserine modification. Residues Lys-108, Lys-114, Lys-123, Lys-135, Lys-144, and Lys-155 each carry the N6-acetyllysine modification. The residue at position 171 (Lys-171) is an N6-acetyllysine; alternate. Residue Lys-171 is modified to N6-succinyllysine; alternate. Residue Lys-171 forms a Glycyl lysine isopeptide (Lys-Gly) (interchain with G-Cter in SUMO2); alternate linkage. N6-acetyllysine is present on residues Lys-180, Lys-201, and Lys-208. A Glycyl lysine isopeptide (Lys-Gly) (interchain with G-Cter in SUMO2); alternate cross-link involves residue Lys-201. Lys-201 participates in a covalent cross-link: Glycyl lysine isopeptide (Lys-Gly) (interchain with G-Cter in SUMO); alternate. Lys-208 participates in a covalent cross-link: Glycyl lysine isopeptide (Lys-Gly) (interchain with G-Cter in SUMO2). Ser-212 carries the post-translational modification Phosphoserine. Residues Lys-219 and Lys-233 each participate in a glycyl lysine isopeptide (Lys-Gly) (interchain with G-Cter in SUMO2) cross-link. The tract at residues 219-242 (KRRHETRLVEIDNGKQREFESRLA) is linker 2. 4 positions are modified to N6-acetyllysine: Lys-233, Lys-260, Lys-265, and Lys-270. Positions 243–383 (DALQDLRAQH…HAYRKLLEGE (141 aa)) are coil 2. Lys-260 participates in a covalent cross-link: Glycyl lysine isopeptide (Lys-Gly) (interchain with G-Cter in SUMO2); alternate. A Glycyl lysine isopeptide (Lys-Gly) (interchain with G-Cter in SUMO2); alternate cross-link involves residue Lys-270. Phosphoserine occurs at positions 277, 282, 301, and 307. Lys-311 is covalently cross-linked (Glycyl lysine isopeptide (Lys-Gly) (interchain with G-Cter in SUMO2); alternate). N6-acetyllysine occurs at positions 311, 316, and 341. Residues Lys-366 and Lys-378 each participate in a glycyl lysine isopeptide (Lys-Gly) (interchain with G-Cter in SUMO2) cross-link. The disordered stretch occupies residues 384–442 (EERLRLSPSPTSQRSRGRASSHSSQTQSGGSVTKKRKLESSESRSSFSQHARTSGRVAV). The tail stretch occupies residues 384–664 (EERLRLSPSP…TQSPQNCSIM (281 aa)). Residues Ser-390, Ser-392, Ser-395, Ser-398, Ser-403, Ser-404, Ser-406, Ser-407, and Ser-414 each carry the phosphoserine modification. Positions 403–414 (SSHSSQTQSGGS) are enriched in low complexity. A Phosphothreonine modification is found at Thr-416. Lys-417 is modified (N6-acetyllysine). Residues Lys-417 and Lys-420 each participate in a glycyl lysine isopeptide (Lys-Gly) (interchain with G-Cter in SUMO2) cross-link. A Nuclear localization signal motif is present at residues 417-422 (KKRKLE). 4 positions are modified to phosphoserine: Ser-423, Ser-426, Ser-429, and Ser-431. In terms of domain architecture, LTD spans 428–545 (SSFSQHARTS…EEVAMRKLVR (118 aa)). A Glycyl lysine isopeptide (Lys-Gly) (interchain with G-Cter in SUMO2); alternate cross-link involves residue Lys-450. Lys-450 and Lys-457 each carry N6-acetyllysine. A phosphoserine mark is found at Ser-458 and Ser-463. Residues Lys-470 and Lys-486 each participate in a glycyl lysine isopeptide (Lys-Gly) (interchain with G-Cter in SUMO2) cross-link. Lys-486 carries the N6-acetyllysine modification. Phosphothreonine is present on residues Thr-496 and Thr-505. A phosphoserine mark is found at Ser-533 and Ser-546. At Thr-548 the chain carries Phosphothreonine. Residues 555-577 (DEDGDDLLHHHHGSHGSSSGDPA) are disordered. Residues Ser-568 and Ser-571 each carry the phosphoserine modification. A Glycyl lysine isopeptide (Lys-Gly) (interchain with G-Cter in SUMO2); alternate cross-link involves residue Lys-597. Lys-597 is covalently cross-linked (Glycyl lysine isopeptide (Lys-Gly) (interchain with G-Cter in SUMO1); alternate). Positions 598–620 (ASASSSGAQVGGSISSGSSASSV) are disordered. Residues Ser-612, Ser-613, Ser-616, and Ser-619 each carry the phosphoserine modification. O-linked (GlcNAc) serine glycans are attached at residues Ser-625 and Ser-628. Phosphoserine occurs at positions 628, 632, and 636. Positions 647 to 661 (LLGNSRPRTQSPQNC) are cleaved as a propeptide — removed in Lamin-A/C form. Cys-661 is subject to Cysteine methyl ester. Cys-661 carries the S-farnesyl cysteine lipid modification. Residues 662–664 (SIM) constitute a propeptide, removed in Prelamin-A/C form and in Lamin-A/C form.

It belongs to the intermediate filament family. As to quaternary structure, homodimer of lamin A and lamin C. Lamin dimers then assemble into dimeric head-to-tail polymers. Ultimately, two head-to-tail polymers assemble laterally into a protofilament with a uniformly shaped rod of 3.5 nm in diameter. Interacts with lamin-associated polypeptides IA, IB and TMPO-alpha, RB1 and with emerin. Interacts with SREBF1, SREBF2, SUN2 and TMEM43. Interacts with TMEM201. Proteolytically processed isoform A interacts with NARF. Interacts with SUN1. Interacts with MLIP. Interacts with DMPK; may regulate nuclear envelope stability. Interacts with SUV39H1; the interaction increases stability of SUV39H1. Interacts with SYNE2. Interacts with ITSN1 isoform 2. Interacts with IFFO1; enables the formation of an interior nucleoskeleton that is recruited to DNA double-strand breaks. In terms of assembly, interacts with EMD. Interacts (via C-terminus) with LEMD2 (via N-terminus) (in vitro). Post-translationally, proteolytic cleavage of the C-terminal of 18 residues of prelamin-A/C results in the production of lamin-A/C. The prelamin-A/C maturation pathway includes farnesylation of CAAX motif by protein farnesyltransferase (FNTA and FNTB), removal of the last three amino acids (-AAX) by RCE1/FACE2 and/or ZMPSTE24, methylation of the C-terminal cysteine by ICMT and endoproteolytic removal of the last 15 C-terminal amino acids by ZMPSTE24. Proteolytic cleavage requires prior farnesylation and methylation, and absence of these blocks cleavage. In terms of processing, farnesylation of prelamin-A/C facilitates nuclear envelope targeting. Phosphorylation plays a key role in lamin organization, subcellular localization and nuclear envelope disintegration. Phosphorylation by CDK1 at Ser-22 and Ser-392 at the onset of mitosis drives lamin disassembly and nuclear envelope breakdown. Phosphorylation at Ser-22 and Ser-392 during interphase promotes localization to the nucleoplasm and regulates lamina assembly. Phosphorylation at Ser-22, Ser-392 and Ser-628 during interphase causes redistribution between the nucleus and the cytoplasm. Phosphorylation at Ser-22 by CDK1 regulates matrix stiffness. Phosphorylation status of Ser-22 determines its localization between double-strand break (DSB) sites and the nuclear matrix. Phosphorylated by ATR at Ser-282 in response to DNA damage, leading to lamin disassembly and nuclear envelope rupture. Phosphorylation also regulates stability in micronuclei arising from genome instability: phosphorylation at Ser-395 by ATR in response to genome instability and double-stranded DNA breaks primes LMNA for subsequent phosphorylation at Ser-392 by CDK1 and micronuclei envelope rupture. The rupture of micronuclear envelope triggers the cGAS-STING pathway thereby activating the type I interferon response and innate immunity. Post-translationally, acetylation by KAT8 is required for nuclear architecture. In terms of processing, sumoylation is necessary for the localization to the nuclear envelope.

The protein resides in the nucleus lamina. Its subcellular location is the nucleus envelope. It localises to the nucleus. It is found in the nucleoplasm. The protein localises to the nucleus matrix. Its function is as follows. Lamins are intermediate filament proteins that assemble into a filamentous meshwork, and which constitute the major components of the nuclear lamina, a fibrous layer on the nucleoplasmic side of the inner nuclear membrane. Lamins provide a framework for the nuclear envelope, bridging the nuclear envelope and chromatin, thereby playing an important role in nuclear assembly, chromatin organization, nuclear membrane and telomere dynamics. Lamin A and C also regulate matrix stiffness by conferring nuclear mechanical properties. The structural integrity of the lamina is strictly controlled by the cell cycle, as seen by the disintegration and formation of the nuclear envelope in prophase and telophase, respectively. Lamin A and C are present in equal amounts in the lamina of mammals. Also invoved in DNA repair: recruited by DNA repair proteins XRCC4 and IFFO1 to the DNA double-strand breaks (DSBs) to prevent chromosome translocation by immobilizing broken DNA ends. Required for normal development of peripheral nervous system and skeletal muscle and for muscle satellite cell proliferation. Required for osteoblastogenesis and bone formation. Also prevents fat infiltration of muscle and bone marrow, helping to maintain the volume and strength of skeletal muscle and bone. Required for cardiac homeostasis. Functionally, prelamin-A/C can accelerate smooth muscle cell senescence. It acts to disrupt mitosis and induce DNA damage in vascular smooth muscle cells (VSMCs), leading to mitotic failure, genomic instability, and premature senescence. In Sus scrofa (Pig), this protein is Prelamin-A/C (LMNA).